The primary structure comprises 509 residues: GMP synthase [glutamine-hydrolyzing] (509 aa).

Residues 4-193 (NVLILDFGSQ…LVKIAQVPQN (190 aa)) enclose the Glutamine amidotransferase type-1 domain. Residue cysteine 79 is the Nucleophile of the active site. Residues histidine 167 and glutamate 169 contribute to the active site. One can recognise a GMPS ATP-PPase domain in the interval 194-384 (FTPNAFVSDM…LGIDAELLGR (191 aa)). ATP is bound at residue 221-227 (SGGVDST).

In terms of assembly, homodimer.

It catalyses the reaction XMP + L-glutamine + ATP + H2O = GMP + L-glutamate + AMP + diphosphate + 2 H(+). It functions in the pathway purine metabolism; GMP biosynthesis; GMP from XMP (L-Gln route): step 1/1. Its function is as follows. Catalyzes the synthesis of GMP from XMP. In Flavobacterium psychrophilum (strain ATCC 49511 / DSM 21280 / CIP 103535 / JIP02/86), this protein is GMP synthase [glutamine-hydrolyzing].